Reading from the N-terminus, the 102-residue chain is MNVTEFHQNIEQVWAKIEEQLEAQDCDVDCDTQGSVFSITFQDRSQVVINKQEPLLELWLASRVGGFHFRYQNNNWTSNDGKDFWACLEEACAAHGEIVHFS.

This sequence belongs to the frataxin family.

In terms of biological role, involved in iron-sulfur (Fe-S) cluster assembly. May act as a regulator of Fe-S biogenesis. The sequence is that of Iron-sulfur cluster assembly protein CyaY from Pasteurella multocida (strain Pm70).